The following is a 451-amino-acid chain: Magnesium transporter MgtE (451 aa).

Residues 1–285 are Cytoplasmic-facing; it reads MVQNMTYDEL…TKAYVAAYRR (285 aa). Mg(2+) is bound by residues Asp64 and Asp96. 2 consecutive CBS domains span residues 140-203 and 204-260; these read MTNR…VQDL and MFTR…EADE. Positions 218, 228, 249, 252, 257, 260, and 261 each coordinate Mg(2+). The helical transmembrane segment at 286–306 threads the bilayer; it reads LPWLILLLFIGLISGSIISYF. Over 307–311 the chain is Extracellular; sequence EDALK. A helical membrane pass occupies residues 312–332; it reads QVVALAFFMPMVSGMTGNTGT. Over 333–371 the chain is Cytoplasmic; the sequence is QSLAVVIRGLSKEEMNKKTIVRLIFREFRTSIFIGAVCS. 2 helical membrane passes run 372 to 392 and 393 to 413; these read VLIA…FVVA and SSLF…PIIL. The Cytoplasmic segment spans residues 414 to 427; the sequence is HKLKVDPAIASGPL. Asp419 and Asp433 together coordinate Mg(2+). Residues 428–448 traverse the membrane as a helical segment; the sequence is ITTLNDILSLLIYFGIATAFI. Topologically, residues 449-451 are extracellular; sequence HSL.

Belongs to the SLC41A transporter family. Homodimer.

It is found in the cell membrane. The enzyme catalyses Mg(2+)(in) = Mg(2+)(out). Its activity is regulated as follows. Binds cyclic di-AMP (c-di-AMP), which may regulate the transporter activity. Functionally, acts as a magnesium transporter. MgtE is the dominant transporter under rich-medium growth conditions, and it may provide the primary route of magnesium import in B.subtilis, while the other putative transport proteins are likely to be utilized for more-specialized growth conditions. The polypeptide is Magnesium transporter MgtE (Bacillus subtilis (strain 168)).